Consider the following 104-residue polypeptide: Meiotically up-regulated gene 150 protein (104 aa).

Transmembrane regions (helical) follow at residues phenylalanine 30 to isoleucine 50, threonine 54 to phenylalanine 74, and leucine 84 to isoleucine 104.

It localises to the endoplasmic reticulum membrane. Has a role in meiosis. The protein is Meiotically up-regulated gene 150 protein (mug150) of Schizosaccharomyces pombe (strain 972 / ATCC 24843) (Fission yeast).